A 271-amino-acid polypeptide reads, in one-letter code: Short chain dehydrogenase virK (271 aa).

Residues Leu13, Asp59, Asn87, Tyr168, Lys172, Val201, and Thr203 each contribute to the NADP(+) site. The active-site Proton donor is Tyr168. Lys172 serves as the catalytic Lowers pKa of active site Tyr.

The protein belongs to the short-chain dehydrogenases/reductases (SDR) family.

The protein operates within secondary metabolite biosynthesis. Its function is as follows. Short chain dehydrogenase; part of the gene cluster that mediates the biosynthesis of virensols and trichoxide, fungal natural products that contain or are derived from a salicylaldehyde core. The pathway begins with the synthesis of the reduced chain in virensol C by the highly reducing polyketide synthase virA via condensation of one acetate and 8 malonate units. VirA has interesting programming rules since the first 2 ketides are fully reduced, the 3 following ketides undergo beta-dehydration, and the last 3 ketides are only reduced to beta-hydroxys to yield the trihydroxy portion. The production of aldehyde virensol C by virA alone is surprising, since virA does not contain a reductase (R) domain that is typically associated with reductive product release in HRPKS. The cupin-domain enzyme virC is involved in enhancing virA product turnover. The short-chain dehydrogenase virB then oxidizes the C-7 alcohol of virensol C to a ketone, yielding virensol D. Virensol D is further transformed to salicylaldehyde 5-deoxyaurocitrin by the short-chain dehydrogenase virD. VirD catalyzes the dehydrogenation of C-3 to form the beta-ketone aldehyde, which is followed by the generation of the nucleophilic C-2 that is required for the intramolecular aldol condensation between C-2 and C-7, itself followed by dehydration and aromatization which leads to salicylaldehyde 5-deoxyaurocitrin. While the dehydrogenation of virensol D is definitely catalyzed by virD, the aldol condensation and dehydration may be uncatalyzed or assisted by virD. The short chain dehydrogenase virG then converts salicylaldehyde 5-deoxyaurocitrin into virensol B which is further hydroxylated by the cytochrome P450 monooxygenase virE to yield the hydroquinone virensol A. VirI then may oxidize virensol A to form the quinone, while virH performs the epoxidation. Finally, the two remaining short-chain dehydrogenases, virK and virL, are probably responsible for reducing the ketones to the corresponding alcohols to furnish the epoxycyclohexanol structure in trichoxide. This Hypocrea virens (strain Gv29-8 / FGSC 10586) (Gliocladium virens) protein is Short chain dehydrogenase virK.